Reading from the N-terminus, the 280-residue chain is Transmembrane protein 45B (280 aa).

The next 7 membrane-spanning stretches (helical) occupy residues 7–27 (HALP…KYPL), 49–69 (LIEG…EQFV), 96–116 (MYLF…PLNL), 120–140 (LDRL…YYHV), 150–170 (IHSL…IEVF), 184–204 (LTIL…PLGG), and 216–236 (VMFI…IMAI).

The protein belongs to the TMEM45 family.

It localises to the membrane. The chain is Transmembrane protein 45B (tmem45b) from Xenopus tropicalis (Western clawed frog).